Consider the following 430-residue polypeptide: UDP-N-acetylglucosamine 1-carboxyvinyltransferase (430 aa).

Residue 22–23 participates in phosphoenolpyruvate binding; the sequence is KN. Arg-102 is a binding site for UDP-N-acetyl-alpha-D-glucosamine. Cys-126 serves as the catalytic Proton donor. The residue at position 126 (Cys-126) is a 2-(S-cysteinyl)pyruvic acid O-phosphothioketal. UDP-N-acetyl-alpha-D-glucosamine is bound by residues 131–135, 172–175, Asp-317, and Ile-339; these read RPVDL and KVSV.

The protein belongs to the EPSP synthase family. MurA subfamily.

It is found in the cytoplasm. It carries out the reaction phosphoenolpyruvate + UDP-N-acetyl-alpha-D-glucosamine = UDP-N-acetyl-3-O-(1-carboxyvinyl)-alpha-D-glucosamine + phosphate. Its pathway is cell wall biogenesis; peptidoglycan biosynthesis. Functionally, cell wall formation. Adds enolpyruvyl to UDP-N-acetylglucosamine. The protein is UDP-N-acetylglucosamine 1-carboxyvinyltransferase of Rhizobium meliloti (strain 1021) (Ensifer meliloti).